We begin with the raw amino-acid sequence, 752 residues long: Translation initiation factor IF-2 (752 aa).

Residues 148 to 159 (KKVKDKNKKEEP) are compositionally biased toward basic and acidic residues. The segment at 148-170 (KKVKDKNKKEEPAVTPSTAPRKK) is disordered. A tr-type G domain is found at 250-419 (PRPPIVTVMG…ALQAEIMELK (170 aa)). A G1 region spans residues 259 to 266 (GHVDHGKT). 259 to 266 (GHVDHGKT) lines the GTP pocket. Residues 284-288 (GITQH) are G2. Residues 305–308 (DTPG) form a G3 region. Residues 305–309 (DTPGH) and 359–362 (NKID) each bind GTP. The segment at 359–362 (NKID) is G4. The segment at 395 to 397 (SAK) is G5.

It belongs to the TRAFAC class translation factor GTPase superfamily. Classic translation factor GTPase family. IF-2 subfamily.

It localises to the cytoplasm. In terms of biological role, one of the essential components for the initiation of protein synthesis. Protects formylmethionyl-tRNA from spontaneous hydrolysis and promotes its binding to the 30S ribosomal subunits. Also involved in the hydrolysis of GTP during the formation of the 70S ribosomal complex. The chain is Translation initiation factor IF-2 from Thermodesulfovibrio yellowstonii (strain ATCC 51303 / DSM 11347 / YP87).